The primary structure comprises 375 residues: MSCPVIELTQQLIRRPSLSPDDAGCQALLIERLQAIGFTVERMDFADTQNFWAWRGQGETLAFAGHTDVVPPGDADRWINPPFEPTIRDGMLFGRGAADMKGSLAAMVVAAERFVAQHPNHAGRLAFLITSDEEASAHNGTVKVVEALMARNERLDYCLVGEPSSIEVVGDVVKNGRRGSLTCNLTIHGVQGHVAYPHLADNPVHRAAPFLNELVAIEWDQGNEFFPATSMQIANIQAGTGSNNVIPGELFVQFNFRFSTELTDEMIKAQVLALLEKHQLRYTVDWWLSGQPFLTARGKLVDAVVNAVEHYNEIKPQLLTTGGTSDGRFIARMGAQVVELGPVNATIHKINECVNAADLQLLARMYQRIMEQLVA.

His66 contacts Zn(2+). Asp68 is an active-site residue. Zn(2+) is bound at residue Asp99. The active-site Proton acceptor is the Glu133. Glu134, Glu162, and His348 together coordinate Zn(2+).

Belongs to the peptidase M20A family. DapE subfamily. As to quaternary structure, homodimer. It depends on Zn(2+) as a cofactor. Co(2+) is required as a cofactor.

The enzyme catalyses N-succinyl-(2S,6S)-2,6-diaminopimelate + H2O = (2S,6S)-2,6-diaminopimelate + succinate. Its pathway is amino-acid biosynthesis; L-lysine biosynthesis via DAP pathway; LL-2,6-diaminopimelate from (S)-tetrahydrodipicolinate (succinylase route): step 3/3. Catalyzes the hydrolysis of N-succinyl-L,L-diaminopimelic acid (SDAP), forming succinate and LL-2,6-diaminopimelate (DAP), an intermediate involved in the bacterial biosynthesis of lysine and meso-diaminopimelic acid, an essential component of bacterial cell walls. The sequence is that of Succinyl-diaminopimelate desuccinylase from Escherichia coli O7:K1 (strain IAI39 / ExPEC).